A 213-amino-acid polypeptide reads, in one-letter code: Thymidylate kinase (213 aa).

10-17 provides a ligand contact to ATP; that stretch reads GLEGAGKT.

Belongs to the thymidylate kinase family.

It carries out the reaction dTMP + ATP = dTDP + ADP. In terms of biological role, phosphorylation of dTMP to form dTDP in both de novo and salvage pathways of dTTP synthesis. This is Thymidylate kinase from Escherichia coli O1:K1 / APEC.